Consider the following 510-residue polypeptide: Bifunctional purine biosynthesis protein PurH (510 aa).

The 142-residue stretch at 1–142 (MRALLSVSDK…KNYKDVMVLC (142 aa)) folds into the MGS-like domain.

The protein belongs to the PurH family.

It catalyses the reaction (6R)-10-formyltetrahydrofolate + 5-amino-1-(5-phospho-beta-D-ribosyl)imidazole-4-carboxamide = 5-formamido-1-(5-phospho-D-ribosyl)imidazole-4-carboxamide + (6S)-5,6,7,8-tetrahydrofolate. The enzyme catalyses IMP + H2O = 5-formamido-1-(5-phospho-D-ribosyl)imidazole-4-carboxamide. The protein operates within purine metabolism; IMP biosynthesis via de novo pathway; 5-formamido-1-(5-phospho-D-ribosyl)imidazole-4-carboxamide from 5-amino-1-(5-phospho-D-ribosyl)imidazole-4-carboxamide (10-formyl THF route): step 1/1. Its pathway is purine metabolism; IMP biosynthesis via de novo pathway; IMP from 5-formamido-1-(5-phospho-D-ribosyl)imidazole-4-carboxamide: step 1/1. This Campylobacter jejuni subsp. doylei (strain ATCC BAA-1458 / RM4099 / 269.97) protein is Bifunctional purine biosynthesis protein PurH.